Reading from the N-terminus, the 504-residue chain is Potassium voltage-gated channel subfamily V member 1 (504 aa).

2 disordered regions span residues 1-22 (MDLS…GGSL) and 172-193 (KKDT…QGPC). Residues 1–214 (MDLSPRNRPL…EKPGSSTAAR (214 aa)) lie on the Cytoplasmic side of the membrane. Low complexity predominate over residues 10-22 (LLESSSLDSGGSL). Positions 172–185 (KKDTDDQESQHESE) are enriched in basic and acidic residues. The helical transmembrane segment at 215-235 (IFGVISIIFVAVSIVNMALMS) threads the bilayer. At 236–242 (AELSWLN) the chain is on the extracellular side. A helical membrane pass occupies residues 243 to 263 (LQLLEILEYVCISWFTGEFIL). Topologically, residues 264 to 280 (RFLCVKDRCRFLRKVPN) are cytoplasmic. A helical membrane pass occupies residues 281–301 (IIDLLAILPFYITLLVESLSG). Residues 302–313 (SHTTQELENVGR) lie on the Extracellular side of the membrane. The chain crosses the membrane as a helical; Voltage-sensor span at residues 314-335 (LVQVLRLLRALRMLKLGRHSTG). The Cytoplasmic segment spans residues 336 to 349 (LRSLGMTITQCYEE). The chain crosses the membrane as a helical span at residues 350–370 (VGLLLLFLSVGISIFSTIEYF). The short motif at 396 to 401 (TVGYGD) is the Selectivity filter element. A helical transmembrane segment spans residues 411 to 431 (IVAFMCILSGILVLALPIAII). The Cytoplasmic segment spans residues 432–504 (NDRFSACYFT…RSSGGDDFWF (73 aa)).

It belongs to the potassium channel family. V (TC 1.A.1.2) subfamily. Kv8.1/KCNV1 sub-subfamily. As to quaternary structure, heteromultimer with KCNB1 and KCNB2. Interacts with KCNC4 and KCND1. Detected in brain, throughout layers II, IV and VI of the brain cortex. Detected in cerebellum and hippocampus, in the granule cell layer, Purkinje cell layer, pyramidal cell layer and dentate gyrus. Detected at lower levels in olfactory bulb, amygdala, thalamus, hypothalamus, midbrain and brainstem.

It is found in the cell membrane. Its function is as follows. Potassium channel subunit that does not form functional channels by itself. Modulates KCNB1 and KCNB2 channel activity by shifting the threshold for inactivation to more negative values and by slowing the rate of inactivation. Can down-regulate the channel activity of KCNB1, KCNB2, KCNC4 and KCND1, possibly by trapping them in intracellular membranes. In Mesocricetus auratus (Golden hamster), this protein is Potassium voltage-gated channel subfamily V member 1 (KCNV1).